The primary structure comprises 78 residues: Signal peptidase complex subunit 1 (78 aa).

The Cytoplasmic portion of the chain corresponds to 1–18 (MNYLEGTIDFAGQLRCQK). A helical transmembrane segment spans residues 19-38 (YMNYGLCTSAVISYIYGYLV). Residues 39 to 42 (QDSY) are Lumenal-facing. The chain crosses the membrane as a helical span at residues 43 to 63 (CVIKLFLILASLVALVCLPAW). Residues 64–78 (SMYNKNPLKFQKKKE) are Cytoplasmic-facing.

It belongs to the SPCS1 family. In terms of assembly, component of the signal peptidase complex (SPC) composed of a catalytic subunit sec11 and three accessory subunits spc1, spc2 and spc3. The complex induces a local thinning of the ER membrane which is used to measure the length of the signal peptide (SP) h-region of protein substrates. This ensures the selectivity of the complex towards h-regions shorter than 18-20 amino acids. SPC associates with the translocon complex.

It localises to the endoplasmic reticulum membrane. In terms of biological role, component of the signal peptidase complex (SPC) which catalyzes the cleavage of N-terminal signal sequences from nascent proteins as they are translocated into the lumen of the endoplasmic reticulum. Dispensable for SPC enzymatic activity. In Schizosaccharomyces pombe (strain 972 / ATCC 24843) (Fission yeast), this protein is Signal peptidase complex subunit 1.